The primary structure comprises 248 residues: Triosephosphate isomerase (248 aa).

Thr-4 bears the Phosphothreonine mark. The substrate site is built by Asn-10 and Lys-12. Ser-71 is modified (phosphoserine). His-95 serves as the catalytic Electrophile. Glu-165 acts as the Proton acceptor in catalysis. Ser-215 is modified (phosphoserine). A Glycyl lysine isopeptide (Lys-Gly) (interchain with G-Cter in ubiquitin) cross-link involves residue Lys-223.

This sequence belongs to the triosephosphate isomerase family. In terms of assembly, homodimer.

The enzyme catalyses D-glyceraldehyde 3-phosphate = dihydroxyacetone phosphate. It functions in the pathway carbohydrate biosynthesis; gluconeogenesis. The protein operates within carbohydrate degradation; glycolysis; D-glyceraldehyde 3-phosphate from glycerone phosphate: step 1/1. This is Triosephosphate isomerase (TPI1) from Saccharomyces cerevisiae (strain ATCC 204508 / S288c) (Baker's yeast).